A 422-amino-acid chain; its full sequence is MNIDVWIKNITQLVTVQAHGKPKKGKEMQDVGIIQDGWIAVAGDRIVGIGSGEISADFQVGENTVIISGEGKTVTPGLIDPHTHLVHAGSRENELALKLKGVPYLEILKQGGGILSTVNATKKATMEELVAQSKKSLDRMLSYGVTTVEIKSGYGLELEAEIKQLEAIHRLQQQTPMDLVSTFMGAHAIPKEYKENPEEFIDLIIEEMLPAIKEKNLAEFCDVFCEEGVFSVDQTRRILEAARSLGFKNKIHADEIVPLGGAELAAELQTISAEHLMAASETGLKMMAESNVVPVALPGTSFNLATGKYADARKMIEYGLPVALATDYNPGSCPTENIQLIMSIGCLYLKMTPEEVISAVTINAAAAIDRTQEIGSIEVGKKADITIFDAPNLYYIPYHFGVNHVDTVLKSGKIVVEKGNVI.

The Fe(3+) site is built by H82 and H84. Zn(2+) contacts are provided by H82 and H84. Residues R91, Y154, and H187 each coordinate 4-imidazolone-5-propanoate. Residue Y154 coordinates N-formimidoyl-L-glutamate. Residue H252 participates in Fe(3+) binding. Zn(2+) is bound at residue H252. A 4-imidazolone-5-propanoate-binding site is contributed by E255. D327 lines the Fe(3+) pocket. D327 contacts Zn(2+). Positions 329 and 331 each coordinate N-formimidoyl-L-glutamate. S332 contacts 4-imidazolone-5-propanoate.

The protein belongs to the metallo-dependent hydrolases superfamily. HutI family. Zn(2+) serves as cofactor. It depends on Fe(3+) as a cofactor.

It localises to the cytoplasm. It carries out the reaction 4-imidazolone-5-propanoate + H2O = N-formimidoyl-L-glutamate. Its pathway is amino-acid degradation; L-histidine degradation into L-glutamate; N-formimidoyl-L-glutamate from L-histidine: step 3/3. Its function is as follows. Catalyzes the hydrolytic cleavage of the carbon-nitrogen bond in imidazolone-5-propanoate to yield N-formimidoyl-L-glutamate. It is the third step in the universal histidine degradation pathway. This chain is Imidazolonepropionase, found in Alkaliphilus oremlandii (strain OhILAs) (Clostridium oremlandii (strain OhILAs)).